A 209-amino-acid chain; its full sequence is Ribosomal RNA large subunit methyltransferase E (209 aa).

The S-adenosyl-L-methionine site is built by Gly63, Trp65, Asp83, Asp99, and Asp124. The active-site Proton acceptor is Lys164.

It belongs to the class I-like SAM-binding methyltransferase superfamily. RNA methyltransferase RlmE family.

Its subcellular location is the cytoplasm. The catalysed reaction is uridine(2552) in 23S rRNA + S-adenosyl-L-methionine = 2'-O-methyluridine(2552) in 23S rRNA + S-adenosyl-L-homocysteine + H(+). Specifically methylates the uridine in position 2552 of 23S rRNA at the 2'-O position of the ribose in the fully assembled 50S ribosomal subunit. In Shewanella loihica (strain ATCC BAA-1088 / PV-4), this protein is Ribosomal RNA large subunit methyltransferase E.